The following is an 808-amino-acid chain: Probable inorganic carbon transporter subunit DabA (808 aa).

Zn(2+) contacts are provided by Cys-334, Asp-336, His-494, and Cys-509.

This sequence belongs to the inorganic carbon transporter (TC 9.A.2) DabA family. Forms a complex with DabB. Requires Zn(2+) as cofactor.

It is found in the cell inner membrane. In terms of biological role, part of an energy-coupled inorganic carbon pump. The polypeptide is Probable inorganic carbon transporter subunit DabA (Allorhizobium ampelinum (strain ATCC BAA-846 / DSM 112012 / S4) (Agrobacterium vitis (strain S4))).